A 331-amino-acid chain; its full sequence is MRPALAVGLVFAGCCSNVIFLELLARKHPGCGNIVTFAQFLFIAVEGFLFEADLGRKPPAIPIRYYAIMVTMFFTVSVVNNYALNLNIAMPLHMIFRSGSLIANMILGIIILKKRYSIFKYTSIALVSVGIFICTFMSAKQVTSQSSLSENDGFQAFVWWLLGIGALTFALLMSARMGIFQETLYKQFGKHSKEALFYNHALPLPGFIFLASDIYDHAVLFNKSELYEIPGIGVTLPIMWFYLLMNIITQYVCIRGVFILTTECASLTVTLVVTLRKFVSLIFSILYFQNPFTLWHWLGTLFVFIGTLMYTEVWNNLGTTKSEPQKDNKKN.

The next 11 helical transmembrane spans lie at 4 to 24, 30 to 50, 59 to 79, 92 to 112, 117 to 137, 153 to 173, 201 to 221, 229 to 249, 251 to 267, 268 to 288, and 291 to 311; these read ALAVGLVFAGCCSNVIFLELL, GCGNIVTFAQFLFIAVEGFLF, PAIPIRYYAIMVTMFFTVSVV, LHMIFRSGSLIANMILGIIIL, SIFKYTSIALVSVGIFICTFM, GFQAFVWWLLGIGALTFALLM, ALPLPGFIFLASDIYDHAVLF, IPGIGVTLPIMWFYLLMNIIT, YVCIRGVFILTTECASL, TVTLVVTLRKFVSLIFSILYF, and PFTLWHWLGTLFVFIGTLMYT. The short motif at 326–331 is the Mediates endoplasmic reticulum retention element; that stretch reads KDNKKN.

It belongs to the nucleotide-sugar transporter family. SLC35B subfamily.

It is found in the endoplasmic reticulum membrane. The enzyme catalyses UDP-N-acetyl-alpha-D-glucosamine(in) + UDP-alpha-D-glucuronate(out) = UDP-N-acetyl-alpha-D-glucosamine(out) + UDP-alpha-D-glucuronate(in). The catalysed reaction is UDP-alpha-D-xylose(in) + UDP-alpha-D-glucuronate(out) = UDP-alpha-D-xylose(out) + UDP-alpha-D-glucuronate(in). Functionally, antiporter that transports nucleotide sugars across the endoplasmic reticulum (ER) membrane in exchange for another nucleotide sugar. May couple UDP-alpha-D-glucuronate (UDP-GlcA) or UDP-alpha-D-xylose (UDP-Xyl) efflux to UDP-alpha-D-glucuronate (UDP-GlcA) influx into the ER lumen, which in turn stimulates glucuronidation and excretion of endobiotics and xenobiotics. In Macaca fascicularis (Crab-eating macaque), this protein is Nucleotide sugar transporter SLC35B4 (SLC35B4).